Consider the following 235-residue polypeptide: 2-C-methyl-D-erythritol 4-phosphate cytidylyltransferase (235 aa).

It belongs to the IspD/TarI cytidylyltransferase family. IspD subfamily.

It carries out the reaction 2-C-methyl-D-erythritol 4-phosphate + CTP + H(+) = 4-CDP-2-C-methyl-D-erythritol + diphosphate. The protein operates within isoprenoid biosynthesis; isopentenyl diphosphate biosynthesis via DXP pathway; isopentenyl diphosphate from 1-deoxy-D-xylulose 5-phosphate: step 2/6. Catalyzes the formation of 4-diphosphocytidyl-2-C-methyl-D-erythritol from CTP and 2-C-methyl-D-erythritol 4-phosphate (MEP). The protein is 2-C-methyl-D-erythritol 4-phosphate cytidylyltransferase of Pseudomonas fluorescens (strain Pf0-1).